The sequence spans 87 residues: Exodeoxyribonuclease 7 small subunit (87 aa).

The protein belongs to the XseB family. In terms of assembly, heterooligomer composed of large and small subunits.

The protein localises to the cytoplasm. It catalyses the reaction Exonucleolytic cleavage in either 5'- to 3'- or 3'- to 5'-direction to yield nucleoside 5'-phosphates.. Its function is as follows. Bidirectionally degrades single-stranded DNA into large acid-insoluble oligonucleotides, which are then degraded further into small acid-soluble oligonucleotides. The protein is Exodeoxyribonuclease 7 small subunit of Xanthomonas campestris pv. campestris (strain 8004).